The primary structure comprises 279 residues: 4-hydroxy-3-methylbut-2-enyl diphosphate reductase (279 aa).

Cysteine 12 contributes to the [4Fe-4S] cluster binding site. (2E)-4-hydroxy-3-methylbut-2-enyl diphosphate contacts are provided by histidine 42 and histidine 74. 2 residues coordinate dimethylallyl diphosphate: histidine 42 and histidine 74. 2 residues coordinate isopentenyl diphosphate: histidine 42 and histidine 74. Cysteine 96 serves as a coordination point for [4Fe-4S] cluster. Residue histidine 124 coordinates (2E)-4-hydroxy-3-methylbut-2-enyl diphosphate. Histidine 124 serves as a coordination point for dimethylallyl diphosphate. Histidine 124 lines the isopentenyl diphosphate pocket. The active-site Proton donor is glutamate 126. Threonine 162 lines the (2E)-4-hydroxy-3-methylbut-2-enyl diphosphate pocket. Residue cysteine 190 participates in [4Fe-4S] cluster binding. 4 residues coordinate (2E)-4-hydroxy-3-methylbut-2-enyl diphosphate: serine 218, serine 219, asparagine 220, and serine 263. The dimethylallyl diphosphate site is built by serine 218, serine 219, asparagine 220, and serine 263. Isopentenyl diphosphate-binding residues include serine 218, serine 219, asparagine 220, and serine 263.

The protein belongs to the IspH family. [4Fe-4S] cluster serves as cofactor.

It carries out the reaction isopentenyl diphosphate + 2 oxidized [2Fe-2S]-[ferredoxin] + H2O = (2E)-4-hydroxy-3-methylbut-2-enyl diphosphate + 2 reduced [2Fe-2S]-[ferredoxin] + 2 H(+). The catalysed reaction is dimethylallyl diphosphate + 2 oxidized [2Fe-2S]-[ferredoxin] + H2O = (2E)-4-hydroxy-3-methylbut-2-enyl diphosphate + 2 reduced [2Fe-2S]-[ferredoxin] + 2 H(+). Its pathway is isoprenoid biosynthesis; dimethylallyl diphosphate biosynthesis; dimethylallyl diphosphate from (2E)-4-hydroxy-3-methylbutenyl diphosphate: step 1/1. It functions in the pathway isoprenoid biosynthesis; isopentenyl diphosphate biosynthesis via DXP pathway; isopentenyl diphosphate from 1-deoxy-D-xylulose 5-phosphate: step 6/6. In terms of biological role, catalyzes the conversion of 1-hydroxy-2-methyl-2-(E)-butenyl 4-diphosphate (HMBPP) into a mixture of isopentenyl diphosphate (IPP) and dimethylallyl diphosphate (DMAPP). Acts in the terminal step of the DOXP/MEP pathway for isoprenoid precursor biosynthesis. This is 4-hydroxy-3-methylbut-2-enyl diphosphate reductase from Alkaliphilus oremlandii (strain OhILAs) (Clostridium oremlandii (strain OhILAs)).